The sequence spans 433 residues: Shufflon protein C' (433 aa).

Residues 1–361 are constant region; that stretch reads MKKYDRGWAS…TGAILSCQSG (361 aa). A variable region region spans residues 362–433; it reads RWSGGNKINY…HVDAYCCPFN (72 aa).

The chain is Shufflon protein C' from Escherichia coli.